A 322-amino-acid chain; its full sequence is MISLLAVAVLAGCSNPETRSQANRGFDYEQETLRTAPLLIPEGLQAPRFNTEYVIPKGTAQGVTGKVLDIRPPTQVLPLVRGSEAMTEGSGLWFYQQRLDQPLERELNQALTVFFEQTDTDYDAVANGFESSGDAIGAPSQQFRWQLMPDAVRRAVAVQVQSTEGGGVLAQDRLRAEASMLNAFSLSYQRELSRQQELLDQGPIALTLDAGQGLLLAEQDYDRTWKRLITLLPRLGFDISNRQQALGYVDVEFDGLSKGDWQDLRLPALDIPEQEYRIQLGDLGSRTSLSLSNKDREPVAADVLSKLVNTLAPAFERTDLVR.

A signal peptide spans 1-22 (MISLLAVAVLAGCSNPETRSQA).

The protein belongs to the BamC family. In terms of assembly, part of the Bam complex.

It localises to the cell outer membrane. In terms of biological role, part of the outer membrane protein assembly complex, which is involved in assembly and insertion of beta-barrel proteins into the outer membrane. In Oceanimonas sp. (strain GK1 / IBRC-M 10197), this protein is Outer membrane protein assembly factor BamC.